The following is a 186-amino-acid chain: Astacin-like metalloprotease toxin 5 (186 aa).

The Peptidase M12A domain maps to 1 to 186 (NAVKYDQQLW…CHSKRKAELL (186 aa)). Intrachain disulfides connect Cys-42-Cys-177 and Cys-63-Cys-84. His-92 contributes to the Zn(2+) binding site. The active site involves Glu-93. His-96 and His-102 together coordinate Zn(2+). Asn-122 carries an N-linked (GlcNAc...) asparagine glycan.

Monomer. The cofactor is Zn(2+). Expressed by the venom gland.

The protein localises to the secreted. Its activity is regulated as follows. Inhibited by 1,10-phenanthroline. Functionally, zinc metalloprotease. Provoques deadhesion of endothelial cells from cell cultures, and also degradation of fibronectin, fibrinogen and gelatin in vitro. Its role in the venom is not fully understood but it might act as a spreading factor that facilitates diffusion of other venom toxins. Alternatively, it might be involved in the proteolytic processing of other venom toxins or it might play a role in extra-oral digestion of prey. The chain is Astacin-like metalloprotease toxin 5 from Loxosceles gaucho (Spider).